A 148-amino-acid chain; its full sequence is Transcriptional regulator MraZ (148 aa).

SpoVT-AbrB domains lie at S5 to V51 and A80 to K123.

It belongs to the MraZ family. As to quaternary structure, forms oligomers.

The protein resides in the cytoplasm. The protein localises to the nucleoid. The protein is Transcriptional regulator MraZ of Nitrosomonas europaea (strain ATCC 19718 / CIP 103999 / KCTC 2705 / NBRC 14298).